Consider the following 261-residue polypeptide: MDSNSSNKIVLVTGANQGLGFAVIEVAGVRYPSNTYILCARDIEKGQQAVHQLRDRGVAAIDLVELDVTNDDHIAAAVRHVEAQYGRLDVLVNNAGFVRLGHQDTNLSEMRATYNEYMNVHITSVAVVTHAFTPLLHRSPAPKVINVTSGLGSITNVLSPRRMARVPPYGASKVGMNGLTAHLQVSENERVAAGEAKAPRIRFFISNPGLLKTAFSNYIAWGKEPQAGAESIVQLMGDEEGKFDHAMQWEHEEGEMRVVPW.

Leu19, Asp67, Asn94, Tyr169, Lys173, and Thr213 together coordinate NADP(+). The active-site Proton donor is Tyr169. The active-site Lowers pKa of active site Tyr is Lys173.

The protein belongs to the short-chain dehydrogenases/reductases (SDR) family.

Functionally, short-chain dehydrogenase/reductase; part of the gene cluster that mediates the biosynthesis of fumigermin that inhibits germination of spores of the inducing S.rapamycinicus, and thus helps the fungus to defend resources in the shared habitat against a bacterial competitor. The partially reducing polyketide synthase fngA alone is sufficient for the production of fumigermin. FgnA catalyzes the condensation of 3 malonyl-CoA units to an acetyl-CoA starter, and 3 methylations to yield fumigermin. It is remarkable that the five cluster genes including fgnA are conserved in distantly related fungi, supporting the assumption of a fumigermin cluster; it is thus possible that originally all five genes were functional, but that the genes encoding tailoring enzymes became inactive from mutations, similar to the case of the fgnA gene in strains A1163 and Af293. This is Short-chain dehydrogenase/reductase AFUA_1G00990 from Aspergillus fumigatus (strain ATCC MYA-4609 / CBS 101355 / FGSC A1100 / Af293) (Neosartorya fumigata).